The sequence spans 141 residues: Transmembrane protein 216 (141 aa).

4 helical membrane passes run 15–35 (VLFF…LLIF), 49–69 (LVLD…RLFF), 82–102 (LGIS…YLLL), and 115–135 (SILL…LATF).

In terms of assembly, part of the tectonic-like complex (also named B9 complex). Interacts with TMEM107.

Its subcellular location is the membrane. The protein resides in the cytoplasm. It is found in the cytoskeleton. The protein localises to the cilium basal body. Functionally, part of the tectonic-like complex which is required for tissue-specific ciliogenesis and may regulate ciliary membrane composition. The polypeptide is Transmembrane protein 216 (Tmem216) (Mus musculus (Mouse)).